The following is a 457-amino-acid chain: Squalene epoxidase erg1 (457 aa).

FAD contacts are provided by residues 15–16, 35–36, Arg43, Arg114, Val130, Asp293, and Met306; these read IT and ER. Transmembrane regions (helical) follow at residues 347 to 364, 409 to 429, and 433 to 453; these read GYSF…KLFT, FYAV…ALLM, and IIES…YILS.

The protein belongs to the squalene monooxygenase family. FAD is required as a cofactor.

Its subcellular location is the microsome membrane. The protein resides in the endoplasmic reticulum membrane. It localises to the vacuole membrane. It carries out the reaction squalene + reduced [NADPH--hemoprotein reductase] + O2 = (S)-2,3-epoxysqualene + oxidized [NADPH--hemoprotein reductase] + H2O + H(+). The protein operates within terpene metabolism; lanosterol biosynthesis; lanosterol from farnesyl diphosphate: step 2/3. It participates in steroid metabolism; ergosterol biosynthesis. Activity is blocked by the allylamine class antifungal terbinafine. Functionally, squalene epoxidase; part of the third module of ergosterol biosynthesis pathway that includes by the late steps of the pathway. Erg1 catalyzes the epoxidation of squalene into 2,3-epoxysqualene. The third module or late pathway involves the ergosterol synthesis itself through consecutive reactions that mainly occur in the endoplasmic reticulum (ER) membrane. Firstly, the squalene synthase erg9 catalyzes the condensation of 2 farnesyl pyrophosphate moieties to form squalene, which is the precursor of all steroids. Secondly, squalene is converted into lanosterol by the consecutive action of the squalene epoxidase erg1 and the lanosterol synthase erg7. The lanosterol 14-alpha-demethylase erg11/cyp1 catalyzes C14-demethylation of lanosterol to produce 4,4'-dimethyl cholesta-8,14,24-triene-3-beta-ol. In the next steps, a complex process involving various demethylation, reduction and desaturation reactions catalyzed by the C-14 reductase erg24 and the C-4 demethylation complex erg25-erg26-erg27 leads to the production of zymosterol. Erg28 likely functions in the C-4 demethylation complex reaction by tethering erg26 and Erg27 to the endoplasmic reticulum or to facilitate interaction between these proteins. Then, the sterol 24-C-methyltransferase erg6 catalyzes the methyl transfer from S-adenosyl-methionine to the C-24 of zymosterol to form fecosterol. The C-8 sterol isomerase erg2 catalyzes the reaction which results in unsaturation at C-7 in the B ring of sterols and thus converts fecosterol to episterol. The sterol-C5-desaturases erg31 and erg32 then catalyze the introduction of a C-5 double bond in the B ring to produce 5-dehydroepisterol. The C-22 sterol desaturase erg5 further converts 5-dehydroepisterol into ergosta-5,7,22,24(28)-tetraen-3beta-ol by forming the C-22(23) double bond in the sterol side chain. Finally, ergosta-5,7,22,24(28)-tetraen-3beta-ol is substrate of the C-24(28) sterol reductase erg4 to produce ergosterol. In the genus Schizosaccharomyces, a second route exists between lanosterol and fecosterol, via the methylation of lanosterol to eburicol by erg6, followed by C14-demethylation by erg11/cyp1 and C4-demethylation by the demethylation complex erg25-erg26-erg27. This chain is Squalene epoxidase erg1, found in Schizosaccharomyces pombe (strain 972 / ATCC 24843) (Fission yeast).